An 880-amino-acid polypeptide reads, in one-letter code: Alanine--tRNA ligase (880 aa).

4 residues coordinate Zn(2+): histidine 571, histidine 575, cysteine 673, and histidine 677.

Belongs to the class-II aminoacyl-tRNA synthetase family. The cofactor is Zn(2+).

It is found in the cytoplasm. The catalysed reaction is tRNA(Ala) + L-alanine + ATP = L-alanyl-tRNA(Ala) + AMP + diphosphate. In terms of biological role, catalyzes the attachment of alanine to tRNA(Ala) in a two-step reaction: alanine is first activated by ATP to form Ala-AMP and then transferred to the acceptor end of tRNA(Ala). Also edits incorrectly charged Ser-tRNA(Ala) and Gly-tRNA(Ala) via its editing domain. In Oleidesulfovibrio alaskensis (strain ATCC BAA-1058 / DSM 17464 / G20) (Desulfovibrio alaskensis), this protein is Alanine--tRNA ligase.